A 246-amino-acid chain; its full sequence is Exosome complex component Rrp41 (246 aa).

The protein belongs to the RNase PH family. Rrp41 subfamily. As to quaternary structure, component of the archaeal exosome complex. Forms a hexameric ring-like arrangement composed of 3 Rrp41-Rrp42 heterodimers. The hexameric ring associates with a trimer of Rrp4 and/or Csl4 subunits.

It localises to the cytoplasm. Catalytic component of the exosome, which is a complex involved in RNA degradation. Has 3'-&gt;5' exoribonuclease activity. Can also synthesize heteromeric RNA-tails. This Pyrobaculum islandicum (strain DSM 4184 / JCM 9189 / GEO3) protein is Exosome complex component Rrp41.